Reading from the N-terminus, the 217-residue chain is Methylthioribulose-1-phosphate dehydratase (217 aa).

Zn(2+) is bound by residues H106 and H108.

This sequence belongs to the aldolase class II family. MtnB subfamily. Zn(2+) serves as cofactor.

The enzyme catalyses 5-(methylsulfanyl)-D-ribulose 1-phosphate = 5-methylsulfanyl-2,3-dioxopentyl phosphate + H2O. Its pathway is amino-acid biosynthesis; L-methionine biosynthesis via salvage pathway; L-methionine from S-methyl-5-thio-alpha-D-ribose 1-phosphate: step 2/6. In terms of biological role, catalyzes the dehydration of methylthioribulose-1-phosphate (MTRu-1-P) into 2,3-diketo-5-methylthiopentyl-1-phosphate (DK-MTP-1-P). The chain is Methylthioribulose-1-phosphate dehydratase from Xanthomonas campestris pv. campestris (strain B100).